A 94-amino-acid polypeptide reads, in one-letter code: Integration host factor subunit beta (94 aa).

This sequence belongs to the bacterial histone-like protein family. In terms of assembly, heterodimer of an alpha and a beta chain.

Functionally, this protein is one of the two subunits of integration host factor, a specific DNA-binding protein that functions in genetic recombination as well as in transcriptional and translational control. In Edwardsiella ictaluri (strain 93-146), this protein is Integration host factor subunit beta.